Reading from the N-terminus, the 988-residue chain is Protein SEMI-ROLLED LEAF 2 (988 aa).

A disordered region spans residues 844 to 865; sequence SVDGGLHESPITNTGSSISKTT. The segment covering 853–865 has biased composition (polar residues); that stretch reads PITNTGSSISKTT.

As to expression, expressed in root tips, and in the vascular bundles of leaf blades, leaf sheaths, and roots, especially in their sclerenchymatous cells.

It localises to the nucleus. Its subcellular location is the cytoplasm. Functionally, functions in regulating leaf rolling through abaxial side leaf cell differentiation. May be involved in the transdifferentiation process from mesophyll cells to sclerenchymatous cells. This is Protein SEMI-ROLLED LEAF 2 from Oryza sativa subsp. japonica (Rice).